A 366-amino-acid chain; its full sequence is Carbamoyl phosphate synthase small chain (366 aa).

The tract at residues Met-1–Ser-172 is CPSase. Ser-45, Gly-220, and Gly-222 together coordinate L-glutamine. In terms of domain architecture, Glutamine amidotransferase type-1 spans Ser-172–Glu-363. The Nucleophile role is filled by Cys-247. Positions 248, 251, 289, 291, and 292 each coordinate L-glutamine. Catalysis depends on residues His-336 and Glu-338.

This sequence belongs to the CarA family. As to quaternary structure, composed of two chains; the small (or glutamine) chain promotes the hydrolysis of glutamine to ammonia, which is used by the large (or ammonia) chain to synthesize carbamoyl phosphate. Tetramer of heterodimers (alpha,beta)4.

The catalysed reaction is hydrogencarbonate + L-glutamine + 2 ATP + H2O = carbamoyl phosphate + L-glutamate + 2 ADP + phosphate + 2 H(+). The enzyme catalyses L-glutamine + H2O = L-glutamate + NH4(+). The protein operates within amino-acid biosynthesis; L-arginine biosynthesis; carbamoyl phosphate from bicarbonate: step 1/1. Its pathway is pyrimidine metabolism; UMP biosynthesis via de novo pathway; (S)-dihydroorotate from bicarbonate: step 1/3. Its function is as follows. Small subunit of the glutamine-dependent carbamoyl phosphate synthetase (CPSase). CPSase catalyzes the formation of carbamoyl phosphate from the ammonia moiety of glutamine, carbonate, and phosphate donated by ATP, constituting the first step of 2 biosynthetic pathways, one leading to arginine and/or urea and the other to pyrimidine nucleotides. The small subunit (glutamine amidotransferase) binds and cleaves glutamine to supply the large subunit with the substrate ammonia. This Methanococcus maripaludis (strain C7 / ATCC BAA-1331) protein is Carbamoyl phosphate synthase small chain.